Here is a 353-residue protein sequence, read N- to C-terminus: AA9 family lytic polysaccharide monooxygenase A (353 aa).

The signal sequence occupies residues 1 to 19 (MKSTFGLLALAAAAKMAHA). Cu(2+)-binding residues include histidine 20 and histidine 102. An intrachain disulfide couples cysteine 62 to cysteine 183. Residue histidine 169 participates in O2 binding. Position 180 (tyrosine 180) interacts with Cu(2+). The span at 266–276 (KPTTTTAAAPA) shows a compositional bias: low complexity. The segment at 266–316 (KPTTTTAAAPAETDSCDGDDDDYETETPAPQASATQAPAPQRPAPQTPSGS) is disordered. The span at 279 to 290 (DSCDGDDDDYET) shows a compositional bias: acidic residues. Low complexity predominate over residues 291–304 (ETPAPQASATQAPA). The CBM1 domain maps to 315–351 (GSVKEWYQCGGINYTGAKNCESGLVCKEWNPYYHQCI). N-linked (GlcNAc...) asparagine glycosylation occurs at asparagine 327.

It belongs to the polysaccharide monooxygenase AA9 family. Requires Cu(2+) as cofactor.

Its subcellular location is the secreted. It carries out the reaction [(1-&gt;4)-beta-D-glucosyl]n+m + reduced acceptor + O2 = 4-dehydro-beta-D-glucosyl-[(1-&gt;4)-beta-D-glucosyl]n-1 + [(1-&gt;4)-beta-D-glucosyl]m + acceptor + H2O.. Its function is as follows. Lytic polysaccharide monooxygenase (LPMO) that depolymerizes crystalline and amorphous polysaccharides via the oxidation of scissile alpha- or beta-(1-4)-glycosidic bonds, yielding C4 oxidation products. Catalysis by LPMOs requires the reduction of the active-site copper from Cu(II) to Cu(I) by a reducing agent and H(2)O(2) or O(2) as a cosubstrate. This Aspergillus clavatus (strain ATCC 1007 / CBS 513.65 / DSM 816 / NCTC 3887 / NRRL 1 / QM 1276 / 107) protein is AA9 family lytic polysaccharide monooxygenase A (eglD).